The sequence spans 72 residues: Small ribosomal subunit protein bS18 (72 aa).

This sequence belongs to the bacterial ribosomal protein bS18 family. As to quaternary structure, part of the 30S ribosomal subunit. Forms a tight heterodimer with protein bS6.

In terms of biological role, binds as a heterodimer with protein bS6 to the central domain of the 16S rRNA, where it helps stabilize the platform of the 30S subunit. This is Small ribosomal subunit protein bS18 from Francisella tularensis subsp. holarctica (strain FTNF002-00 / FTA).